The chain runs to 429 residues: Ribosomal RNA small subunit methyltransferase B (429 aa).

S-adenosyl-L-methionine-binding positions include 254-260, Asp-277, Asp-303, and Asp-322; that span reads CAAPGGK. Residue Cys-375 is the Nucleophile of the active site.

It belongs to the class I-like SAM-binding methyltransferase superfamily. RsmB/NOP family.

It is found in the cytoplasm. The enzyme catalyses cytidine(967) in 16S rRNA + S-adenosyl-L-methionine = 5-methylcytidine(967) in 16S rRNA + S-adenosyl-L-homocysteine + H(+). In terms of biological role, specifically methylates the cytosine at position 967 (m5C967) of 16S rRNA. This chain is Ribosomal RNA small subunit methyltransferase B, found in Escherichia coli O7:K1 (strain IAI39 / ExPEC).